Consider the following 410-residue polypeptide: MNIINIFIPDLPESVTDATIIKWHKKKGDKVQEDTILVDIETDKVILEIPSPSDGILNSIIADKGKIVLPGQVIGTLLKIGIKNEEKIIKTTNNVVNTDNNQNINLKLLEKTYSPTVRRLISMHDLRDVDIIQGTGTKNRLTRKDILNYLKNIRSNTNKKINNYDLNAYNFNTTHKNHRSIKRVKMTRLRKKISERLLSTKNNTASLTTFNEVNMQSILNLRRKYGELFKQKHGIKLGLMSFYVKAVIEALKIFPEINASIDNDEIIYYNYFDISIAISTPRGLVTPVLKNADLMSMAEIEIKIKDFSEKGKNSKLTIDDLIGGNFTITNGGVFGSLFSTPLINPPQSAILGMHAIHKRPVIVDENIEVHPMMYLALSYDHRLIDGKESVGFLLKIKEFLEDFSRIVLNI.

The Lipoyl-binding domain occupies 3–81 (IINIFIPDLP…QVIGTLLKIG (79 aa)). Lys-44 is subject to N6-lipoyllysine. The region spanning 112–150 (TYSPTVRRLISMHDLRDVDIIQGTGTKNRLTRKDILNYL) is the Peripheral subunit-binding (PSBD) domain. Residues His-381 and Asp-385 contribute to the active site.

This sequence belongs to the 2-oxoacid dehydrogenase family. As to quaternary structure, forms a 24-polypeptide structural core with octahedral symmetry. Part of the 2-oxoglutarate dehydrogenase (OGDH) complex composed of E1 (2-oxoglutarate dehydrogenase), E2 (dihydrolipoamide succinyltransferase) and E3 (dihydrolipoamide dehydrogenase); the complex contains multiple copies of the three enzymatic components (E1, E2 and E3). (R)-lipoate is required as a cofactor.

It catalyses the reaction N(6)-[(R)-dihydrolipoyl]-L-lysyl-[protein] + succinyl-CoA = N(6)-[(R)-S(8)-succinyldihydrolipoyl]-L-lysyl-[protein] + CoA. It participates in amino-acid degradation; L-lysine degradation via saccharopine pathway; glutaryl-CoA from L-lysine: step 6/6. In terms of biological role, E2 component of the 2-oxoglutarate dehydrogenase (OGDH) complex which catalyzes the second step in the conversion of 2-oxoglutarate to succinyl-CoA and CO(2). In Buchnera aphidicola subsp. Baizongia pistaciae (strain Bp), this protein is Dihydrolipoyllysine-residue succinyltransferase component of 2-oxoglutarate dehydrogenase complex (sucB).